We begin with the raw amino-acid sequence, 808 residues long: Protein SEY1 (808 aa).

The disordered stretch occupies residues 1 to 21 (MSSELSEGELSHTSSSSSFVP). Topologically, residues 1–701 (MSSELSEGEL…KRSIVQHITQ (701 aa)) are cytoplasmic. Residues 57–286 (GNNYHIISVF…VGDELFKPEY (230 aa)) form the GB1/RHD3-type G domain. 67–74 (GSQSTGKS) provides a ligand contact to GTP. The helical transmembrane segment at 702 to 722 (IPYYIYLVIVFLGWNEFMAII) threads the bilayer. Residues 723 to 725 (RNP) lie on the Lumenal side of the membrane. A helical transmembrane segment spans residues 726-746 (LLFSLALLLGASVYILYKLNL). Residues 747-808 (LKPAIVVAQR…YSDNIELDDM (62 aa)) lie on the Cytoplasmic side of the membrane.

This sequence belongs to the TRAFAC class dynamin-like GTPase superfamily. GB1/RHD3 GTPase family. RHD3 subfamily.

The protein resides in the endoplasmic reticulum membrane. In terms of biological role, cooperates with the reticulon proteins and tubule-shaping DP1 family proteins to generate and maintain the structure of the tubular endoplasmic reticulum network. Has GTPase activity, which is required for its function in ER organization. The protein is Protein SEY1 of Candida tropicalis (strain ATCC MYA-3404 / T1) (Yeast).